We begin with the raw amino-acid sequence, 1090 residues long: ATP-dependent helicase/deoxyribonuclease subunit B (1090 aa).

ATP is bound at residue 7–14; it reads GPVGSGKS. Residues Cys-719, Cys-1035, Cys-1038, and Cys-1044 each coordinate [4Fe-4S] cluster.

The protein belongs to the helicase family. AddB/RexB type 1 subfamily. As to quaternary structure, heterodimer of AddA and AddB. Mg(2+) is required as a cofactor. The cofactor is [4Fe-4S] cluster.

The heterodimer acts as both an ATP-dependent DNA helicase and an ATP-dependent, dual-direction single-stranded exonuclease. Recognizes the chi site generating a DNA molecule suitable for the initiation of homologous recombination. The AddB subunit has 5' -&gt; 3' nuclease activity but not helicase activity. This Carboxydothermus hydrogenoformans (strain ATCC BAA-161 / DSM 6008 / Z-2901) protein is ATP-dependent helicase/deoxyribonuclease subunit B.